A 687-amino-acid chain; its full sequence is Pentatricopeptide repeat-containing protein At3g09060 (687 aa).

18 PPR repeats span residues 42–76 (SAVV…ECKC), 77–107 (DEDV…MREI), 113–147 (AIRS…GVAP), 148–182 (NLQT…GFKP), 183–217 (DVFS…GVAP), 218–253 (DVTC…SVYP), 254–288 (NVKT…EREK), 289–323 (DLYT…KASI), 324–358 (DVVT…NSVN), 359–392 (IVSY…GYAA), 393–427 (DKTT…GGHL), 428–462 (DVYA…GVEL), 463–497 (NSHV…GCRP), 498–532 (TVVS…GWKP), 533–567 (DLKT…GLET), 568–602 (DVMM…NCTA), 603–637 (NLVT…GLQP), and 638–672 (DIIS…GIFP).

This sequence belongs to the PPR family. P subfamily.

In Arabidopsis thaliana (Mouse-ear cress), this protein is Pentatricopeptide repeat-containing protein At3g09060.